The chain runs to 240 residues: uncharacterized protein (240 aa).

Residues Met-1–Ile-27 are disordered. Residues Ser-59 and Ser-95 each carry the phosphoserine modification. Residues Arg-189–Lys-227 are disordered. A compositionally biased stretch (polar residues) spans Ala-202–Gly-218.

This is an uncharacterized protein from Saccharomyces cerevisiae (strain ATCC 204508 / S288c) (Baker's yeast).